Here is a 205-residue protein sequence, read N- to C-terminus: ATP-dependent Clp protease proteolytic subunit (205 aa).

The active-site Nucleophile is S107. H132 is a catalytic residue.

It belongs to the peptidase S14 family. As to quaternary structure, fourteen ClpP subunits assemble into 2 heptameric rings which stack back to back to give a disk-like structure with a central cavity, resembling the structure of eukaryotic proteasomes.

Its subcellular location is the cytoplasm. It catalyses the reaction Hydrolysis of proteins to small peptides in the presence of ATP and magnesium. alpha-casein is the usual test substrate. In the absence of ATP, only oligopeptides shorter than five residues are hydrolyzed (such as succinyl-Leu-Tyr-|-NHMec, and Leu-Tyr-Leu-|-Tyr-Trp, in which cleavage of the -Tyr-|-Leu- and -Tyr-|-Trp bonds also occurs).. Its function is as follows. Cleaves peptides in various proteins in a process that requires ATP hydrolysis. Has a chymotrypsin-like activity. Plays a major role in the degradation of misfolded proteins. This Pseudoalteromonas translucida (strain TAC 125) protein is ATP-dependent Clp protease proteolytic subunit.